The sequence spans 56 residues: Large ribosomal subunit protein bL32c (56 aa).

Basic residues predominate over residues 1 to 20 (MAAPKKRTSKSRKNMRKSTW). The interval 1–28 (MAAPKKRTSKSRKNMRKSTWKRQAATQA) is disordered.

It belongs to the bacterial ribosomal protein bL32 family.

The protein resides in the plastid. It localises to the chloroplast. This Mesostigma viride (Green alga) protein is Large ribosomal subunit protein bL32c (rpl32).